The primary structure comprises 297 residues: T-cell leukemia homeobox protein 3 (297 aa).

Residues 1–68 (MEPAAGAQGP…LGGPRGGAPY (68 aa)) form a disordered region. The span at 32–52 (APPPPPPPPPPPPPPPPPPRG) shows a compositional bias: pro residues. The homeobox DNA-binding region spans 172-231 (RKKPRTSFSRVQICELEKRFHRQKYLASAERAALAKSLKMTDAQVKTWFQNRRTKWRRQT).

In terms of tissue distribution, expression is restricted to neurons in the peripheral and central nervous system.

The protein localises to the nucleus. Seems to be involved in the development of cranial sensory innervation from peripheral ganglia. The polypeptide is T-cell leukemia homeobox protein 3 (TLX3) (Gallus gallus (Chicken)).